A 533-amino-acid polypeptide reads, in one-letter code: Tyrosine protein-kinase src-1 (533 aa).

G2 is lipidated: N-myristoyl glycine. The region spanning 71 to 132 (QERETLVALY…PRNFVAKQQT (62 aa)) is the SH3 domain. The 100-residue stretch at 138–237 (WYAGKIPRNR…GLCCQLTFPA (100 aa)) folds into the SH2 domain. A Protein kinase domain is found at 262–521 (LHLKRKLGDG…TLYHFFDDYF (260 aa)). ATP-binding positions include 268–276 (LGDGNFGEV) and K290. The active-site Proton acceptor is the D381. Y416 carries the post-translational modification Phosphotyrosine; by autocatalysis. Phosphotyrosine is present on Y528.

Belongs to the protein kinase superfamily. Tyr protein kinase family. SRC subfamily. Interacts (via SH2 domain and SH3 domain) with unc-5 (via cytoplasmic domain); the interaction requires kinase activity. Interacts (when activated and phosphorylated at 'Tyr-416') with ina-1 (via cytoplasmic domain) and with ced-2 (via SH2 domain). Requires Mg(2+) as cofactor. The cofactor is Mn(2+). In terms of processing, may be phosphorylated on Tyr-528 by csk-1. As to expression, expressed in some neurons (ASE, ADF, AVA, AUA, RMDV and BAG) in the head region, anchor cell, vulva, cells around anus, body wall muscle, pharyngeal muscles in procorpus and metacorpus. Expressed in gonadal distal tip cells.

It localises to the cell membrane. Its subcellular location is the cell projection. The protein localises to the phagocytic cup. The catalysed reaction is L-tyrosyl-[protein] + ATP = O-phospho-L-tyrosyl-[protein] + ADP + H(+). May be activated by autophosphorylation. May be inhibited by csk-1-mediated phosphorylation. Functionally, non-receptor tyrosine-protein kinase which plays a role in endoderm development by controlling spindle orientation in EMS blastomere, probably downstream of receptor mes-1. Also involved in embryonic body morphogenesis, especially in the formation of the pharynx and the intestine. May be dispensable for pharyngeal muscle organization in the adult. Probably phosphorylates netrin receptor unc-5, to regulate distal tip cell (DTC) migration during gonad development and in axon repulsion. Plays a role in the migration of the QR neuroblast, a precursor of the AVM neuron, and in the migration of the axon cone of AVM, ALM, CAN and PVM neurons. May act downstream of migratory protein mig-13 to control AVM neuron migration. Probably downstream of integrin ina-1/pat-3, plays a role in the clearance of apoptotic cells during mid-embryogenesis. Phosphorylates ced-1 at 'Tyr-1019' which promotes ced-1 proteasomal degradation, maintaining appropriate ced-1 levels for apoptotic cell clearance. In Caenorhabditis elegans, this protein is Tyrosine protein-kinase src-1.